Consider the following 219-residue polypeptide: 2-hydroxy-3-keto-5-methylthiopentenyl-1-phosphate phosphatase (219 aa).

The protein belongs to the HAD-like hydrolase superfamily. MtnX family.

The enzyme catalyses 2-hydroxy-5-methylsulfanyl-3-oxopent-1-enyl phosphate + H2O = 1,2-dihydroxy-5-(methylsulfanyl)pent-1-en-3-one + phosphate. Its pathway is amino-acid biosynthesis; L-methionine biosynthesis via salvage pathway; L-methionine from S-methyl-5-thio-alpha-D-ribose 1-phosphate: step 4/6. Functionally, dephosphorylates 2-hydroxy-3-keto-5-methylthiopentenyl-1-phosphate (HK-MTPenyl-1-P) yielding 1,2-dihydroxy-3-keto-5-methylthiopentene (DHK-MTPene). In Bacillus thuringiensis subsp. konkukian (strain 97-27), this protein is 2-hydroxy-3-keto-5-methylthiopentenyl-1-phosphate phosphatase.